We begin with the raw amino-acid sequence, 419 residues long: Inward rectifier potassium channel 16 (419 aa).

The Cytoplasmic segment spans residues 1-67; that stretch reads MSYYGSSYRI…MVDIFTTLVD (67 aa). A helical transmembrane segment spans residues 68–94; the sequence is TKWRHMFVVFSLSYILSWLIFGSIFWL. The Extracellular portion of the chain corresponds to 95–117; it reads IALHHGDLLSDPDITPCVDNVHS. Residues 118–134 constitute an intramembrane region (helical; Pore-forming); it reads FTAAFLFSLETQTTIGY. The Selectivity filter signature appears at 131 to 136; it reads TIGYGY. Over 135-143 the chain is Extracellular; that stretch reads GYRCVTEEC. The chain crosses the membrane as a helical span at residues 144-171; that stretch reads SVAVLTVILQSILSCIINTFIIGAALAK. Residues 172–419 are Cytoplasmic-facing; the sequence is MATARKRAQT…LNRISMESQM (248 aa). Phosphoserine is present on residues Ser358, Ser374, and Ser376.

Belongs to the inward rectifier-type potassium channel (TC 1.A.2.1) family. KCNJ16 subfamily. In terms of assembly, it forms heteromeric channels with Kir4.1/KCNJ10; this interaction is required for KCNJ16 localization to the basolateral membrane in kidney cells. As a heteromer with KCNJ10, may interact with MAGI1; this interaction may facilitate KCNJ10/KCNJ16 potassium channel expression at the basolateral membrane in kidney cells. May form heteromers with Kir2.1/KCNJ2. Can form heteromeric channels with Kir4.2/KCNJ15. In terms of tissue distribution, expressed in the brain, testis, liver, spleen, kidney, submaxillary gland and adrenals. In the kidney, expressed in the epithelial cells of both proximal and distal convoluted tubules, in the endothelial cells surrounding glomerular capillaries and in the flattened parietal layer of Bowman's capsule.

The protein resides in the membrane. It is found in the basolateral cell membrane. It carries out the reaction K(+)(in) = K(+)(out). Its activity is regulated as follows. Channel activity is strongly regulated by variations of cytosolic pH; channels are activated by alkaline and inhibited by acidic pH values. Activated by phosphatidylinositol 4,5 biphosphate (PtdIns(4,5)P2). Its function is as follows. Inward rectifier potassium channels are characterized by a greater tendency to allow potassium to flow into the cell rather than out of it. Their voltage dependence is regulated by the concentration of extracellular potassium; as external potassium is raised, the voltage range of the channel opening shifts to more positive voltages. The inward rectification is mainly due to the blockage of outward current by internal magnesium. KCNJ16 may be involved in the regulation of fluid and pH balance. In the kidney, together with KCNJ10, mediates basolateral K(+) recycling in distal tubules; this process is critical for Na(+) reabsorption at the tubules. This is Inward rectifier potassium channel 16 (Kcnj16) from Rattus norvegicus (Rat).